The chain runs to 919 residues: Chitin synthase 1 (919 aa).

Disordered stretches follow at residues 1–69 (MSYD…SFQT) and 109–134 (NLAS…ALGP). The segment covering 11–30 (GQGRDYARQQRQQRSYQLSD) has biased composition (low complexity). Asn-187 and Asn-556 each carry an N-linked (GlcNAc...) asparagine glycan. Transmembrane regions (helical) follow at residues 594–614 (IVLL…SIII), 630–650 (LVVF…FLVL), 668–688 (IASF…SLWL), 713–733 (VLIA…ILYA), 742–762 (FPQY…YAFC), 843–863 (LVAF…NVNG), and 887–919 (IILW…FRKT).

Belongs to the chitin synthase family. Class III subfamily.

It localises to the cell membrane. It is found in the cytoplasmic vesicle membrane. It catalyses the reaction [(1-&gt;4)-N-acetyl-beta-D-glucosaminyl](n) + UDP-N-acetyl-alpha-D-glucosamine = [(1-&gt;4)-N-acetyl-beta-D-glucosaminyl](n+1) + UDP + H(+). Functionally, polymerizes chitin, a structural polymer of the cell wall and septum, by transferring the sugar moiety of UDP-GlcNAc to the non-reducing end of the growing chitin polymer. This Mycosarcoma maydis (Corn smut fungus) protein is Chitin synthase 1.